Consider the following 251-residue polypeptide: MAVHLLIVDALNLIRRIHAVQGSPCVETCQHALDQLIMHSQPTHAVAVFDDENRSSGWRHQRLPDYKAGRPPMPEELHNEMPALRAAFEQRGVPCWSASGNEADDLAATLAVKVTQAGHQATIVSTDKGYCQLLSPTLRIRDYFQKRWLDAPFIDKEFGVQPQQLPDYWGLAGISSSKVPGVAGIGPKSATQLLVEFQSLEGIYENLDAVAEKWRKKLETHKEMAFLCRDIARLQTDMHIDGNLQQLRLVR.

D104 is a Mg(2+) binding site. Residues V160–L249 form the 5'-3' exonuclease domain. Positions 171, 172, 180, 182, and 185 each coordinate K(+). The segment at G184–S189 is interaction with DNA.

The protein belongs to the Xni family. Requires Mg(2+) as cofactor. K(+) is required as a cofactor.

In terms of biological role, has flap endonuclease activity. During DNA replication, flap endonucleases cleave the 5'-overhanging flap structure that is generated by displacement synthesis when DNA polymerase encounters the 5'-end of a downstream Okazaki fragment. This Escherichia coli O81 (strain ED1a) protein is Flap endonuclease Xni.